Here is a 179-residue protein sequence, read N- to C-terminus: Protein GrpE (179 aa).

Residues 1 to 23 (MSEEIKEQNVQDAQNENLAPDSV) form a disordered region.

Belongs to the GrpE family. In terms of assembly, homodimer.

It is found in the cytoplasm. Its function is as follows. Participates actively in the response to hyperosmotic and heat shock by preventing the aggregation of stress-denatured proteins, in association with DnaK and GrpE. It is the nucleotide exchange factor for DnaK and may function as a thermosensor. Unfolded proteins bind initially to DnaJ; upon interaction with the DnaJ-bound protein, DnaK hydrolyzes its bound ATP, resulting in the formation of a stable complex. GrpE releases ADP from DnaK; ATP binding to DnaK triggers the release of the substrate protein, thus completing the reaction cycle. Several rounds of ATP-dependent interactions between DnaJ, DnaK and GrpE are required for fully efficient folding. In Campylobacter curvus (strain 525.92), this protein is Protein GrpE.